The chain runs to 160 residues: Serine-protein kinase RsbW (160 aa).

Belongs to the anti-sigma-factor family.

The enzyme catalyses L-seryl-[protein] + ATP = O-phospho-L-seryl-[protein] + ADP + H(+). It carries out the reaction L-threonyl-[protein] + ATP = O-phospho-L-threonyl-[protein] + ADP + H(+). Its function is as follows. Negative regulator of sigma-B activity. Phosphorylates and inactivates its specific antagonist protein, RsbV. Upon phosphorylation of RsbV, RsbW is released and binds to sigma-B, thereby blocking its ability to form an RNA polymerase holoenzyme (E-sigma-B). In Bacillus cereus (strain G9842), this protein is Serine-protein kinase RsbW.